The primary structure comprises 304 residues: UDP-N-acetylenolpyruvoylglucosamine reductase (304 aa).

In terms of domain architecture, FAD-binding PCMH-type spans 32-198 (RVGGPADILV…LSAELELQEG (167 aa)). Arg177 is an active-site residue. The Proton donor role is filled by Ser227. Residue Glu297 is part of the active site.

It belongs to the MurB family. The cofactor is FAD.

It localises to the cytoplasm. The catalysed reaction is UDP-N-acetyl-alpha-D-muramate + NADP(+) = UDP-N-acetyl-3-O-(1-carboxyvinyl)-alpha-D-glucosamine + NADPH + H(+). Its pathway is cell wall biogenesis; peptidoglycan biosynthesis. Cell wall formation. The polypeptide is UDP-N-acetylenolpyruvoylglucosamine reductase (Clostridioides difficile (strain 630) (Peptoclostridium difficile)).